The sequence spans 45 residues: Gene 78 protein (45 aa).

Positions 1–14 are enriched in basic and acidic residues; that stretch reads MKKMSDQLKARLEL. Residues 1 to 45 form a disordered region; the sequence is MKKMSDQLKARLELRLSNAAQPHRNRKREMKRPGKGNRNNWKKEY. Basic residues predominate over residues 23-35; it reads HRNRKREMKRPGK.

This Mycobacterium phage L5 (Mycobacteriophage L5) protein is Gene 78 protein (78).